A 488-amino-acid chain; its full sequence is Glutamyl-tRNA(Gln) amidotransferase subunit A (488 aa).

Catalysis depends on charge relay system residues K77 and S152. S176 (acyl-ester intermediate) is an active-site residue.

Belongs to the amidase family. GatA subfamily. As to quaternary structure, heterotrimer of A, B and C subunits.

It catalyses the reaction L-glutamyl-tRNA(Gln) + L-glutamine + ATP + H2O = L-glutaminyl-tRNA(Gln) + L-glutamate + ADP + phosphate + H(+). Functionally, allows the formation of correctly charged Gln-tRNA(Gln) through the transamidation of misacylated Glu-tRNA(Gln) in organisms which lack glutaminyl-tRNA synthetase. The reaction takes place in the presence of glutamine and ATP through an activated gamma-phospho-Glu-tRNA(Gln). In Streptococcus pneumoniae (strain JJA), this protein is Glutamyl-tRNA(Gln) amidotransferase subunit A.